The following is a 459-amino-acid chain: tRNA modification GTPase MnmE (459 aa).

Positions 29, 91, and 130 each coordinate (6S)-5-formyl-5,6,7,8-tetrahydrofolate. In terms of domain architecture, TrmE-type G spans 225 to 381 (GVKVAIVGRP…LEEALEQLVT (157 aa)). Asparagine 235 serves as a coordination point for K(+). Residues 235–240 (NVGKSS), 254–260 (TDLPGTT), and 279–282 (DTAG) contribute to the GTP site. Serine 239 serves as a coordination point for Mg(2+). The K(+) site is built by threonine 254, leucine 256, and threonine 259. Mg(2+) is bound at residue threonine 260. (6S)-5-formyl-5,6,7,8-tetrahydrofolate is bound at residue lysine 459.

Belongs to the TRAFAC class TrmE-Era-EngA-EngB-Septin-like GTPase superfamily. TrmE GTPase family. Homodimer. Heterotetramer of two MnmE and two MnmG subunits. It depends on K(+) as a cofactor.

Its subcellular location is the cytoplasm. In terms of biological role, exhibits a very high intrinsic GTPase hydrolysis rate. Involved in the addition of a carboxymethylaminomethyl (cmnm) group at the wobble position (U34) of certain tRNAs, forming tRNA-cmnm(5)s(2)U34. In Synechococcus sp. (strain JA-3-3Ab) (Cyanobacteria bacterium Yellowstone A-Prime), this protein is tRNA modification GTPase MnmE.